A 282-amino-acid polypeptide reads, in one-letter code: F-actin-capping protein subunit beta (282 aa).

The tract at residues 73 to 103 is disordered; the sequence is SPWSNQFDPPLDEAGSGGVGAGGNEGAGEGA. A compositionally biased stretch (gly residues) spans 87–101; it reads GSGGVGAGGNEGAGE.

Belongs to the F-actin-capping protein beta subunit family. Component of the F-actin capping complex, composed of a heterodimer of an alpha and a beta subunit.

The protein resides in the cytoplasm. It localises to the cytoskeleton. The protein localises to the actin patch. Functionally, F-actin-capping proteins bind in a Ca(2+)-independent manner to the fast growing ends of actin filaments (barbed end) thereby blocking the exchange of subunits at these ends. Unlike other capping proteins (such as gelsolin and severin), these proteins do not sever actin filaments. The polypeptide is F-actin-capping protein subunit beta (CAP2) (Gibberella zeae (strain ATCC MYA-4620 / CBS 123657 / FGSC 9075 / NRRL 31084 / PH-1) (Wheat head blight fungus)).